Here is a 371-residue protein sequence, read N- to C-terminus: MKLLKLAPDVYKFDTAEEFMKYFKVGKGDFILTNEFLYKPFLEKFNDGADAVFQEKYGLGEPSDEMINNIIKDIGDKQYNRIIAVGGGSVIDIAKILSLKYTDDSLDLFEGKVPLVKNKELIIVPTTCGTGSEVTNVSVAELKRRHTKKGIASDELYATYAVLVPEFIKGLPYKFFVTSSVDALIHATEAYVSPNANPYTDMFSVKAMELILNGYMQMVEKGNDYRVEIIEDFVIGSNYAGIAFGNAGVGAVHALSYPIGGNYHVPHGEANYLFFTEIFKTYYEKNPNGKIKDVNKLLAGILKCDESEAYDSLSQLLDKLLSRKPLREYGMKEEEIETFADSVIEGQQRLLVNNYEPFSREDIVNTYKKLY.

Residues 88 to 92 (GSVID), 126 to 130 (TTCGT), and Lys-148 contribute to the NAD(+) site. Positions 182, 186, 253, and 267 each coordinate Fe cation. His-267 is an NAD(+) binding site.

This sequence belongs to the iron-containing alcohol dehydrogenase family. Homodimer. The cofactor is Fe(2+). Cu(2+) is required as a cofactor.

It carries out the reaction 4-hydroxybutanoate + NAD(+) = succinate semialdehyde + NADH + H(+). Inactivated by oxygen. Involved in the anaerobic succinate degradation pathway. Catalyzes the interconversion of gamma-hydroxybutyrate (GHB) and succinic semialdehyde (SSA). The protein is 4-hydroxybutyrate dehydrogenase of Clostridium kluyveri (strain ATCC 8527 / DSM 555 / NBRC 12016 / NCIMB 10680 / K1).